The chain runs to 216 residues: UPF0502 protein PFL_4004 (216 aa).

Belongs to the UPF0502 family.

The protein is UPF0502 protein PFL_4004 of Pseudomonas fluorescens (strain ATCC BAA-477 / NRRL B-23932 / Pf-5).